The sequence spans 89 residues: Small ribosomal subunit protein uS15 (89 aa).

It belongs to the universal ribosomal protein uS15 family. Part of the 30S ribosomal subunit. Forms a bridge to the 50S subunit in the 70S ribosome, contacting the 23S rRNA.

Functionally, one of the primary rRNA binding proteins, it binds directly to 16S rRNA where it helps nucleate assembly of the platform of the 30S subunit by binding and bridging several RNA helices of the 16S rRNA. In terms of biological role, forms an intersubunit bridge (bridge B4) with the 23S rRNA of the 50S subunit in the ribosome. In Actinobacillus pleuropneumoniae serotype 5b (strain L20), this protein is Small ribosomal subunit protein uS15.